The primary structure comprises 502 residues: Phenylalanine--tRNA ligase alpha subunit (502 aa).

Residues Thr339, 382–384, and Tyr422 each bind L-phenylalanine; that span reads QIE. Glu424 contributes to the Mg(2+) binding site. Residue Phe448 coordinates L-phenylalanine.

The protein belongs to the class-II aminoacyl-tRNA synthetase family. Phe-tRNA synthetase alpha subunit type 2 subfamily. In terms of assembly, tetramer of two alpha and two beta subunits. It depends on Mg(2+) as a cofactor.

It localises to the cytoplasm. It carries out the reaction tRNA(Phe) + L-phenylalanine + ATP = L-phenylalanyl-tRNA(Phe) + AMP + diphosphate + H(+). This Halobacterium salinarum (strain ATCC 29341 / DSM 671 / R1) protein is Phenylalanine--tRNA ligase alpha subunit.